The chain runs to 233 residues: Orotidine 5'-phosphate decarboxylase (233 aa).

Substrate-binding positions include Asp-13, Lys-35, 62-71 (DLKFHDIPNT), Thr-122, Arg-182, Gln-191, Gly-211, and Arg-212. Residue Lys-64 is the Proton donor of the active site.

It belongs to the OMP decarboxylase family. Type 1 subfamily. In terms of assembly, homodimer.

It carries out the reaction orotidine 5'-phosphate + H(+) = UMP + CO2. It functions in the pathway pyrimidine metabolism; UMP biosynthesis via de novo pathway; UMP from orotate: step 2/2. Catalyzes the decarboxylation of orotidine 5'-monophosphate (OMP) to uridine 5'-monophosphate (UMP). This Pseudomonas entomophila (strain L48) protein is Orotidine 5'-phosphate decarboxylase.